Consider the following 123-residue polypeptide: Small ribosomal subunit protein uS12 (123 aa).

The residue at position 89 (D89) is a 3-methylthioaspartic acid. A disordered region spans residues 101-123 (TLDTQGVKDRRQRRSKYGAKRPK). A compositionally biased stretch (basic residues) spans 110 to 123 (RRQRRSKYGAKRPK).

This sequence belongs to the universal ribosomal protein uS12 family. As to quaternary structure, part of the 30S ribosomal subunit. Contacts proteins S8 and S17. May interact with IF1 in the 30S initiation complex.

Its function is as follows. With S4 and S5 plays an important role in translational accuracy. In terms of biological role, interacts with and stabilizes bases of the 16S rRNA that are involved in tRNA selection in the A site and with the mRNA backbone. Located at the interface of the 30S and 50S subunits, it traverses the body of the 30S subunit contacting proteins on the other side and probably holding the rRNA structure together. The combined cluster of proteins S8, S12 and S17 appears to hold together the shoulder and platform of the 30S subunit. This is Small ribosomal subunit protein uS12 from Paramagnetospirillum magneticum (strain ATCC 700264 / AMB-1) (Magnetospirillum magneticum).